The sequence spans 591 residues: Negative elongation factor D (591 aa).

Residues 1 to 44 (MAGPAPGTIMGEDYFGNASEWGEEADGGQHQEDDSGEGEDDAEV) are disordered. Residues 34–44 (DSGEGEDDAEV) are compositionally biased toward acidic residues.

This sequence belongs to the NELF-D family. In terms of assembly, the NELF complex is composed of NELFA, NELFB, NELFCD and NELFE; NELFA and NELFCD form a stable subcomplex that binds primarily through NELFCD to the N-terminus of NELFB. Binds RNA which may help to stabilize the NELF complex on nucleic acid. In vitro, the NELFA:NELFCD subcomplex binds to ssDNA and ssRNA in a sequence- and structure-dependent manner. Interacts with ARAF1. Interacts with PCF11. Interacts with NELFB. Interacts with KAT8.

The protein resides in the nucleus. In terms of biological role, essential component of the NELF complex, a complex that negatively regulates the elongation of transcription by RNA polymerase II. The NELF complex, which acts via an association with the DSIF complex and causes transcriptional pausing, is counteracted by the P-TEFb kinase complex. The chain is Negative elongation factor D (Nelfcd) from Mus musculus (Mouse).